The sequence spans 223 residues: Ribonuclease T (223 aa).

The Exonuclease domain occupies 20-194 (VVIDVETAGF…YDTERTAELF (175 aa)). Mg(2+)-binding residues include Asp23, Glu25, His181, and Asp186. His181 acts as the Proton donor/acceptor in catalysis.

This sequence belongs to the RNase T family. Homodimer. Requires Mg(2+) as cofactor.

Functionally, trims short 3' overhangs of a variety of RNA species, leaving a one or two nucleotide 3' overhang. Responsible for the end-turnover of tRNA: specifically removes the terminal AMP residue from uncharged tRNA (tRNA-C-C-A). Also appears to be involved in tRNA biosynthesis. The polypeptide is Ribonuclease T (Shewanella baltica (strain OS185)).